We begin with the raw amino-acid sequence, 329 residues long: N-acetyl-gamma-glutamyl-phosphate reductase (329 aa).

Cys155 is a catalytic residue.

It belongs to the NAGSA dehydrogenase family. Type 1 subfamily.

The protein localises to the cytoplasm. The enzyme catalyses N-acetyl-L-glutamate 5-semialdehyde + phosphate + NADP(+) = N-acetyl-L-glutamyl 5-phosphate + NADPH + H(+). It participates in amino-acid biosynthesis; L-arginine biosynthesis; N(2)-acetyl-L-ornithine from L-glutamate: step 3/4. Catalyzes the NADPH-dependent reduction of N-acetyl-5-glutamyl phosphate to yield N-acetyl-L-glutamate 5-semialdehyde. The sequence is that of N-acetyl-gamma-glutamyl-phosphate reductase from Shewanella pealeana (strain ATCC 700345 / ANG-SQ1).